Consider the following 123-residue polypeptide: Large ribosomal subunit protein uL24 (123 aa).

This sequence belongs to the universal ribosomal protein uL24 family. In terms of assembly, part of the 50S ribosomal subunit.

Functionally, one of two assembly initiator proteins, it binds directly to the 5'-end of the 23S rRNA, where it nucleates assembly of the 50S subunit. Located at the polypeptide exit tunnel on the outside of the subunit. The polypeptide is Large ribosomal subunit protein uL24 (Methanocella arvoryzae (strain DSM 22066 / NBRC 105507 / MRE50)).